Here is an 87-residue protein sequence, read N- to C-terminus: Small ribosomal subunit protein uS15c (87 aa).

This sequence belongs to the universal ribosomal protein uS15 family. As to quaternary structure, part of the 30S ribosomal subunit.

It is found in the plastid. The protein localises to the chloroplast. In Solanum lycopersicum (Tomato), this protein is Small ribosomal subunit protein uS15c (rps15).